The sequence spans 252 residues: Small ribosomal subunit protein uS3 (252 aa).

A KH type-2 domain is found at 39-109; that stretch reads IRNYVNTRLK…EVKIDVVEVV (71 aa). Residues 222-240 are compositionally biased toward basic and acidic residues; it reads MKKIRDRRNDQRSRGGRDS. The tract at residues 222–252 is disordered; sequence MKKIRDRRNDQRSRGGRDSRNKRRRRPKNTA. Residues 241-252 show a composition bias toward basic residues; it reads RNKRRRRPKNTA.

This sequence belongs to the universal ribosomal protein uS3 family. In terms of assembly, part of the 30S ribosomal subunit. Forms a tight complex with proteins S10 and S14.

Its function is as follows. Binds the lower part of the 30S subunit head. Binds mRNA in the 70S ribosome, positioning it for translation. The protein is Small ribosomal subunit protein uS3 of Chlorobium phaeobacteroides (strain BS1).